Consider the following 450-residue polypeptide: Phosphoglucosamine mutase (450 aa).

The active-site Phosphoserine intermediate is the Ser102. Ser102, Asp243, Asp245, and Asp247 together coordinate Mg(2+). Ser102 bears the Phosphoserine mark.

The protein belongs to the phosphohexose mutase family. Requires Mg(2+) as cofactor. Post-translationally, activated by phosphorylation.

It catalyses the reaction alpha-D-glucosamine 1-phosphate = D-glucosamine 6-phosphate. Catalyzes the conversion of glucosamine-6-phosphate to glucosamine-1-phosphate. The protein is Phosphoglucosamine mutase of Rhizobium johnstonii (strain DSM 114642 / LMG 32736 / 3841) (Rhizobium leguminosarum bv. viciae).